The chain runs to 539 residues: MAKIIAFDEEARRGLERGLNILADAVRVTLGPRGRNVVLEKKWGAPTITNDGVSIAKEIELDDPFEKIGAELVKEVAKKTDDVAGDGTTTATVLAQALVREGLRNVAAGADPISLKRGIEKAVAAVTEELKAAAKEIETKEEIAATASISAGDSTIGAIIAEAIDKVGKEGVVTVEESNTFGTELELTEGMRFDKGYLSQYFVTDPERQEAVFEDAYILIVNSKISNIKDLLPIVDKVIQSGKQLLIIAEDVDGEALATLVVNKIRGIFKSVAVKAPGFGDRRKAQLQDIAILTGGQVIAEEVGLKLENVTLDLLGTARKVVITKDETTIVEGGGDATEIAARVQQIRNEIGNTDSDYDREKLQERLAKLAGGVAVIKAGAATEVELKERKHRIEDAVRNAKAAVEEGIVAGGGVALIQAGKLAFEKLQLEGDEATGANIVRVAVDAPLKQIALNAGLEPGVVAERVRNLPSGHGLNAATGEYVDMLAAGINDPVKVTRSALLNAASIAGLFLTTEAVVADKPEKNPAPAGDPTGGMDF.

Residues 29 to 32 (TLGP), 86 to 90 (DGTTT), G413, 477 to 479 (NAA), and D493 each bind ATP.

This sequence belongs to the chaperonin (HSP60) family. In terms of assembly, forms a cylinder of 14 subunits composed of two heptameric rings stacked back-to-back. Interacts with the co-chaperonin GroES.

The protein resides in the cytoplasm. The enzyme catalyses ATP + H2O + a folded polypeptide = ADP + phosphate + an unfolded polypeptide.. Together with its co-chaperonin GroES, plays an essential role in assisting protein folding. The GroEL-GroES system forms a nano-cage that allows encapsulation of the non-native substrate proteins and provides a physical environment optimized to promote and accelerate protein folding. This is Chaperonin GroEL from Clavibacter michiganensis subsp. michiganensis (strain NCPPB 382).